A 505-amino-acid polypeptide reads, in one-letter code: Deoxyguanosinetriphosphate triphosphohydrolase (505 aa).

The HD domain maps to 66–273 (RLTHSMEVQQ…MEAADDISYC (208 aa)).

It belongs to the dGTPase family. Type 1 subfamily. In terms of assembly, homotetramer. Requires Mg(2+) as cofactor.

The catalysed reaction is dGTP + H2O = 2'-deoxyguanosine + triphosphate + H(+). In terms of biological role, dGTPase preferentially hydrolyzes dGTP over the other canonical NTPs. This Salmonella choleraesuis (strain SC-B67) protein is Deoxyguanosinetriphosphate triphosphohydrolase.